Here is a 504-residue protein sequence, read N- to C-terminus: Cystathionine beta-synthase (504 aa).

Heme contacts are provided by Cys12 and His23. Lys78 carries the N6-(pyridoxal phosphate)lysine modification. Residues Asn108, 215–219 (GTGGT), and Ser307 contribute to the pyridoxal 5'-phosphate site. 2 CBS domains span residues 375 to 434 (LSFD…IVKC) and 442 to 498 (MVKQ…NGTS).

Belongs to the cysteine synthase/cystathionine beta-synthase family. As to quaternary structure, homodimer. Requires pyridoxal 5'-phosphate as cofactor.

It carries out the reaction L-homocysteine + L-serine = L,L-cystathionine + H2O. It functions in the pathway amino-acid biosynthesis; L-cysteine biosynthesis; L-cysteine from L-homocysteine and L-serine: step 1/2. With respect to regulation, has no response to S-adenosyl-methionine/AdoMet, unlike mammalian orthologs. Binds non-covalently to a heme group that may control the redox sensitivity of the enzyme. In terms of biological role, hydro-lyase catalyzing the first step of the transsulfuration pathway, where the hydroxyl group of L-serine is displaced by L-homocysteine in a beta-replacement reaction to form L-cystathionine, the precursor of L-cysteine. This Apis mellifera (Honeybee) protein is Cystathionine beta-synthase.